Here is a 612-residue protein sequence, read N- to C-terminus: Dihydroxy-acid dehydratase (612 aa).

Residue Asp81 coordinates Mg(2+). [2Fe-2S] cluster is bound at residue Cys122. Asp123 and Lys124 together coordinate Mg(2+). N6-carboxylysine is present on Lys124. Cys195 is a [2Fe-2S] cluster binding site. Glu491 lines the Mg(2+) pocket. Ser517 (proton acceptor) is an active-site residue.

It belongs to the IlvD/Edd family. In terms of assembly, homodimer. It depends on [2Fe-2S] cluster as a cofactor. The cofactor is Mg(2+).

The enzyme catalyses (2R)-2,3-dihydroxy-3-methylbutanoate = 3-methyl-2-oxobutanoate + H2O. It catalyses the reaction (2R,3R)-2,3-dihydroxy-3-methylpentanoate = (S)-3-methyl-2-oxopentanoate + H2O. It functions in the pathway amino-acid biosynthesis; L-isoleucine biosynthesis; L-isoleucine from 2-oxobutanoate: step 3/4. It participates in amino-acid biosynthesis; L-valine biosynthesis; L-valine from pyruvate: step 3/4. Functionally, functions in the biosynthesis of branched-chain amino acids. Catalyzes the dehydration of (2R,3R)-2,3-dihydroxy-3-methylpentanoate (2,3-dihydroxy-3-methylvalerate) into 2-oxo-3-methylpentanoate (2-oxo-3-methylvalerate) and of (2R)-2,3-dihydroxy-3-methylbutanoate (2,3-dihydroxyisovalerate) into 2-oxo-3-methylbutanoate (2-oxoisovalerate), the penultimate precursor to L-isoleucine and L-valine, respectively. This Haemophilus influenzae (strain PittEE) protein is Dihydroxy-acid dehydratase.